The sequence spans 417 residues: NADH-quinone oxidoreductase subunit D (417 aa).

It belongs to the complex I 49 kDa subunit family. In terms of assembly, NDH-1 is composed of 14 different subunits. Subunits NuoB, C, D, E, F, and G constitute the peripheral sector of the complex.

It localises to the cell inner membrane. It carries out the reaction a quinone + NADH + 5 H(+)(in) = a quinol + NAD(+) + 4 H(+)(out). Its function is as follows. NDH-1 shuttles electrons from NADH, via FMN and iron-sulfur (Fe-S) centers, to quinones in the respiratory chain. The immediate electron acceptor for the enzyme in this species is believed to be ubiquinone. Couples the redox reaction to proton translocation (for every two electrons transferred, four hydrogen ions are translocated across the cytoplasmic membrane), and thus conserves the redox energy in a proton gradient. In Burkholderia lata (strain ATCC 17760 / DSM 23089 / LMG 22485 / NCIMB 9086 / R18194 / 383), this protein is NADH-quinone oxidoreductase subunit D.